Consider the following 342-residue polypeptide: Signal-regulatory protein beta-2 (342 aa).

A signal peptide spans 1-32 (MCSTMSAPTCLAHLPPCFLLLALVLVPSDASG). Ig-like V-type domains follow at residues 33-143 (QSSR…KSDE) and 157-258 (PDLW…SGQG). Residues 33–287 (QSSRNDWQVL…EPATEMSPTG (255 aa)) lie on the Extracellular side of the membrane. Cys-60 and Cys-127 form a disulfide bridge. N-linked (GlcNAc...) asparagine glycans are attached at residues Asn-116, Asn-179, and Asn-231. Residues Cys-180 and Cys-242 are joined by a disulfide bond. A helical membrane pass occupies residues 288-308 (LLVVFAPVVLGLKAITLAALL). Residues 309–342 (LALATSRRSPGQEDVKTTGPAGAMNTLAWSKGQE) lie on the Cytoplasmic side of the membrane. Residues 317-342 (SPGQEDVKTTGPAGAMNTLAWSKGQE) form a disordered region.

It is found in the membrane. This chain is Signal-regulatory protein beta-2 (SIRPB2), found in Homo sapiens (Human).